Reading from the N-terminus, the 409-residue chain is MKEKVVLAYSGGLDTSVILKWLCEKGFDVIAYVANVGQKDDFVAIKEKALKTGASKVYVEDLRREFVTDYIFTALLGNAMYEGRYLLGTAIARPLIAKRQVEIAEKEGAQYVAHGATGKGNDQVRFELTYAALNPNLKVISPWKDPEFLAKFKGRTDLINYAMEKGIPIKVSKKRPYSEDENLMHISHEAGKLEDPAHIPDEDVFTWTVSPKDAPDEETLLEIHFENGIPVKVVNLKDGTEKTDPLELFEYLNEVGAKNGVGRLDMVENRFIGIKSRGVYETPGATILWIAHRDLEGITMDKEVMHLRDMLAPKFAELIYNGFWFSPEMEFLLAAFRKAQENVTGKVTVSIYKGNVMPVARYSPYSLYNPELSSMDVEGGFDATDSKGFINIHALRLKVHQLVKKGYQR.

Residues 8-16 (AYSGGLDTS) and Ala-34 each bind ATP. An L-citrulline-binding site is contributed by Tyr-85. Gly-115 is an ATP binding site. The L-aspartate site is built by Thr-117, Asn-121, and Asp-122. Asn-121 is an L-citrulline binding site. L-citrulline-binding residues include Arg-125, Ser-178, Ser-187, Glu-268, and Tyr-280.

Belongs to the argininosuccinate synthase family. Type 1 subfamily. In terms of assembly, homotetramer.

It is found in the cytoplasm. It carries out the reaction L-citrulline + L-aspartate + ATP = 2-(N(omega)-L-arginino)succinate + AMP + diphosphate + H(+). It participates in amino-acid biosynthesis; L-arginine biosynthesis; L-arginine from L-ornithine and carbamoyl phosphate: step 2/3. In Thermotoga maritima (strain ATCC 43589 / DSM 3109 / JCM 10099 / NBRC 100826 / MSB8), this protein is Argininosuccinate synthase.